Consider the following 337-residue polypeptide: MKVTVLVGGVGGARFLLGVQQLFGLGQFRAQRHTHGRPDTAAGSHELTAIVNIGDDAWIHGLRVCPDLDTCMYTLGGGVDPERGWGHRDETWHAKEELARYGVQPDWFGLGDRDIGTHLVRTQMLNAGYPLTQITAALCDRWQPGARLLPVSDDRCETHVVITDPDDGSRRAIHFQEWWVRYRAQVPTHSFAFVGAEKAAATTETIAAIADADVILIAPSNPVVSVGAILAVPGVRGALRAAGAPIVGYSPIIGGKPLRGMADACLSVIGVESTAEAVGRHYGARRGTGILDCWLVSQDDHADIEGVAVRAVPLMMTDPAATAEMVSAGLQLAGVTP.

D69 contacts 7,8-didemethyl-8-hydroxy-5-deazariboflavin.

The protein belongs to the CofD family. In terms of assembly, homodimer. Requires Mg(2+) as cofactor.

It carries out the reaction enolpyruvoyl-2-diphospho-5'-guanosine + 7,8-didemethyl-8-hydroxy-5-deazariboflavin = dehydro coenzyme F420-0 + GMP + H(+). It participates in cofactor biosynthesis; coenzyme F420 biosynthesis. Its function is as follows. Catalyzes the transfer of the phosphoenolpyruvate moiety from enoylpyruvoyl-2-diphospho-5'-guanosine (EPPG) to 7,8-didemethyl-8-hydroxy-5-deazariboflavin (FO) with the formation of dehydro coenzyme F420-0 and GMP. The polypeptide is Phosphoenolpyruvate transferase (Mycobacterium avium (strain 104)).